Reading from the N-terminus, the 224-residue chain is UPF0758 protein Lm4b_01560 (224 aa).

The region spanning 102-224 (VVRCPEDAVK…YISLKEKGYF (123 aa)) is the MPN domain. 3 residues coordinate Zn(2+): His173, His175, and Asp186. The JAMM motif motif lies at 173–186 (HNHPSGDPTPSSED).

Belongs to the UPF0758 family.

The polypeptide is UPF0758 protein Lm4b_01560 (Listeria monocytogenes serotype 4b (strain CLIP80459)).